The following is a 236-amino-acid chain: Small ribosomal subunit protein uS2c (236 aa).

The protein belongs to the universal ribosomal protein uS2 family.

The protein resides in the plastid. It localises to the chloroplast. This chain is Small ribosomal subunit protein uS2c (rps2), found in Pisum sativum (Garden pea).